We begin with the raw amino-acid sequence, 173 residues long: Small ribosomal subunit protein uS5 (173 aa).

The S5 DRBM domain maps to 18–81 (LREKMIAVNR…EQARRGMFKV (64 aa)).

The protein belongs to the universal ribosomal protein uS5 family. In terms of assembly, part of the 30S ribosomal subunit. Contacts proteins S4 and S8.

With S4 and S12 plays an important role in translational accuracy. Functionally, located at the back of the 30S subunit body where it stabilizes the conformation of the head with respect to the body. The sequence is that of Small ribosomal subunit protein uS5 from Bordetella avium (strain 197N).